The following is a 186-amino-acid chain: Peptidyl-tRNA hydrolase (186 aa).

Residue Y13 coordinates tRNA. The active-site Proton acceptor is the H18. Residues Y59, N61, and N107 each coordinate tRNA.

This sequence belongs to the PTH family. In terms of assembly, monomer.

The protein resides in the cytoplasm. It carries out the reaction an N-acyl-L-alpha-aminoacyl-tRNA + H2O = an N-acyl-L-amino acid + a tRNA + H(+). Its function is as follows. Hydrolyzes ribosome-free peptidyl-tRNAs (with 1 or more amino acids incorporated), which drop off the ribosome during protein synthesis, or as a result of ribosome stalling. Catalyzes the release of premature peptidyl moieties from peptidyl-tRNA molecules trapped in stalled 50S ribosomal subunits, and thus maintains levels of free tRNAs and 50S ribosomes. In Thermotoga maritima (strain ATCC 43589 / DSM 3109 / JCM 10099 / NBRC 100826 / MSB8), this protein is Peptidyl-tRNA hydrolase.